The primary structure comprises 374 residues: Chaperone protein DnaJ (374 aa).

One can recognise a J domain in the interval 4 to 69 (SYYEILEITQ…EKRAIYDRYG (66 aa)). The CR-type zinc finger occupies 136 to 213 (GCKKNIDFTY…CKGLGYNESK (78 aa)). Positions 149, 152, 165, 168, 187, 190, 201, and 204 each coordinate Zn(2+). CXXCXGXG motif repeat units lie at residues 149–156 (CKTCNGTG), 165–172 (CPKCQGRG), 187–194 (CPDCQGSG), and 201–208 (CSDCKGLG).

The protein belongs to the DnaJ family. As to quaternary structure, homodimer. It depends on Zn(2+) as a cofactor.

Its subcellular location is the cytoplasm. In terms of biological role, participates actively in the response to hyperosmotic and heat shock by preventing the aggregation of stress-denatured proteins and by disaggregating proteins, also in an autonomous, DnaK-independent fashion. Unfolded proteins bind initially to DnaJ; upon interaction with the DnaJ-bound protein, DnaK hydrolyzes its bound ATP, resulting in the formation of a stable complex. GrpE releases ADP from DnaK; ATP binding to DnaK triggers the release of the substrate protein, thus completing the reaction cycle. Several rounds of ATP-dependent interactions between DnaJ, DnaK and GrpE are required for fully efficient folding. Also involved, together with DnaK and GrpE, in the DNA replication of plasmids through activation of initiation proteins. The sequence is that of Chaperone protein DnaJ from Campylobacter jejuni subsp. jejuni serotype O:6 (strain 81116 / NCTC 11828).